A 182-amino-acid polypeptide reads, in one-letter code: Flavodoxin (182 aa).

Residues 4-173 enclose the Flavodoxin-like domain; sequence IGLFFGSDTG…RLKGWLSLIA (170 aa).

The protein belongs to the flavodoxin family. FMN serves as cofactor.

Functionally, low-potential electron donor to a number of redox enzymes. NifF is the electron donor to nitrogenase. This chain is Flavodoxin (nifF), found in Rhodobacter capsulatus (strain ATCC BAA-309 / NBRC 16581 / SB1003).